Reading from the N-terminus, the 421-residue chain is Diaminobutyrate--2-oxoglutarate transaminase (421 aa).

Lys267 is modified (N6-(pyridoxal phosphate)lysine).

It belongs to the class-III pyridoxal-phosphate-dependent aminotransferase family. In terms of assembly, homohexamer. Pyridoxal 5'-phosphate serves as cofactor.

The enzyme catalyses L-2,4-diaminobutanoate + 2-oxoglutarate = L-aspartate 4-semialdehyde + L-glutamate. The protein operates within amine and polyamine biosynthesis; ectoine biosynthesis; L-ectoine from L-aspartate 4-semialdehyde: step 1/3. Functionally, catalyzes reversively the conversion of L-aspartate beta-semialdehyde (ASA) to L-2,4-diaminobutyrate (DABA) by transamination with L-glutamate. Seems to use L-glutamate specifically as the amino group donor to ASA, as it is not active with L-alanine, L-glutamine, L-aspartate and L-lysine, and is only poorly active with L-homoserine. In the reverse reaction, gamma-aminobutyric acid (GABA) and L-ornithine can also be used as amino group donors to 2-oxoglutarate, but with a reduced activity compared to that with DABA. The sequence is that of Diaminobutyrate--2-oxoglutarate transaminase (ectB) from Halomonas elongata (strain ATCC 33173 / DSM 2581 / NBRC 15536 / NCIMB 2198 / 1H9).